Consider the following 276-residue polypeptide: UPF0276 protein AM1_3026 (276 aa).

Belongs to the UPF0276 family.

The chain is UPF0276 protein AM1_3026 from Acaryochloris marina (strain MBIC 11017).